Consider the following 180-residue polypeptide: ATP synthase subunit delta (180 aa).

This sequence belongs to the ATPase delta chain family. As to quaternary structure, F-type ATPases have 2 components, F(1) - the catalytic core - and F(0) - the membrane proton channel. F(1) has five subunits: alpha(3), beta(3), gamma(1), delta(1), epsilon(1). F(0) has three main subunits: a(1), b(2) and c(10-14). The alpha and beta chains form an alternating ring which encloses part of the gamma chain. F(1) is attached to F(0) by a central stalk formed by the gamma and epsilon chains, while a peripheral stalk is formed by the delta and b chains.

The protein localises to the cell inner membrane. F(1)F(0) ATP synthase produces ATP from ADP in the presence of a proton or sodium gradient. F-type ATPases consist of two structural domains, F(1) containing the extramembraneous catalytic core and F(0) containing the membrane proton channel, linked together by a central stalk and a peripheral stalk. During catalysis, ATP synthesis in the catalytic domain of F(1) is coupled via a rotary mechanism of the central stalk subunits to proton translocation. Functionally, this protein is part of the stalk that links CF(0) to CF(1). It either transmits conformational changes from CF(0) to CF(1) or is implicated in proton conduction. This Cupriavidus necator (strain ATCC 17699 / DSM 428 / KCTC 22496 / NCIMB 10442 / H16 / Stanier 337) (Ralstonia eutropha) protein is ATP synthase subunit delta.